Here is a 421-residue protein sequence, read N- to C-terminus: UPF0229 protein lpp2857 (421 aa).

The interval 83–110 (IAGDRIKRPSGGGAGGAGGNASDSGEGE) is disordered. The span at 92 to 101 (SGGGAGGAGG) shows a compositional bias: gly residues.

The protein belongs to the UPF0229 family.

The sequence is that of UPF0229 protein lpp2857 from Legionella pneumophila (strain Paris).